Consider the following 959-residue polypeptide: Probable serine/threonine-protein kinase DDB_G0291664 (959 aa).

A disordered region spans residues 154-213; sequence QQQQQQQLTPPPSPPLLPIPQPPAQNEEQQLTQPPSIPPPQQKQIKIQKSDRGTQVKSIT. The span at 162 to 176 shows a compositional bias: pro residues; the sequence is TPPPSPPLLPIPQPP. 2 ANK repeats span residues 294 to 324 and 333 to 362; these read KGET…CMGI and LNKN…PLKM. In terms of domain architecture, Protein kinase spans 482–762; sequence IDFHTQIGSA…EVGIIETEFL (281 aa). ATP is bound by residues 488-496 and K509; that span reads IGSAGNASV. The Proton acceptor role is filled by D610. A disordered region spans residues 904 to 959; that stretch reads NNINNNNNNNNNCNNSKKFKTTSESTSALGSDASSSSSPSSSSPSPKYSASIYHHQ.

It belongs to the protein kinase superfamily. Ser/Thr protein kinase family.

It carries out the reaction L-seryl-[protein] + ATP = O-phospho-L-seryl-[protein] + ADP + H(+). The enzyme catalyses L-threonyl-[protein] + ATP = O-phospho-L-threonyl-[protein] + ADP + H(+). This Dictyostelium discoideum (Social amoeba) protein is Probable serine/threonine-protein kinase DDB_G0291664.